The following is a 257-amino-acid chain: Large ribosomal subunit protein uL3 (257 aa).

Positions 232–257 (LKAPKKQKTKVETNQVNPKIEEEKTK) are disordered.

The protein belongs to the universal ribosomal protein uL3 family. Part of the 50S ribosomal subunit. Forms a cluster with proteins L14 and L19.

Functionally, one of the primary rRNA binding proteins, it binds directly near the 3'-end of the 23S rRNA, where it nucleates assembly of the 50S subunit. The chain is Large ribosomal subunit protein uL3 from Mycoplasma genitalium (strain ATCC 33530 / DSM 19775 / NCTC 10195 / G37) (Mycoplasmoides genitalium).